The following is a 380-amino-acid chain: Anthranilate phosphoribosyltransferase (380 aa).

Glycine 109, asparagine 119, serine 121, threonine 122, lysine 142, serine 144, and serine 146 together coordinate 5-phospho-alpha-D-ribose 1-diphosphate. Aspartate 258 and glutamate 259 together coordinate Mg(2+).

Belongs to the anthranilate phosphoribosyltransferase family. Homodimer. It depends on Mg(2+) as a cofactor.

The catalysed reaction is N-(5-phospho-beta-D-ribosyl)anthranilate + diphosphate = 5-phospho-alpha-D-ribose 1-diphosphate + anthranilate. Its pathway is amino-acid biosynthesis; L-tryptophan biosynthesis; L-tryptophan from chorismate: step 2/5. Its function is as follows. Catalyzes the transfer of the phosphoribosyl group of 5-phosphorylribose-1-pyrophosphate (PRPP) to anthranilate to yield N-(5'-phosphoribosyl)-anthranilate (PRA), the second step in tryptophan biosynthesis. In Saccharomyces cerevisiae (strain ATCC 204508 / S288c) (Baker's yeast), this protein is Anthranilate phosphoribosyltransferase.